The primary structure comprises 304 residues: Ribosomal RNA large subunit methyltransferase F (304 aa).

It belongs to the methyltransferase superfamily. METTL16/RlmF family.

The protein resides in the cytoplasm. The catalysed reaction is adenosine(1618) in 23S rRNA + S-adenosyl-L-methionine = N(6)-methyladenosine(1618) in 23S rRNA + S-adenosyl-L-homocysteine + H(+). Its function is as follows. Specifically methylates the adenine in position 1618 of 23S rRNA. This Klebsiella pneumoniae subsp. pneumoniae (strain ATCC 700721 / MGH 78578) protein is Ribosomal RNA large subunit methyltransferase F.